The primary structure comprises 305 residues: MLKQRTIKSIVKTVGIGLHSGRKVELTLRPAAPGTGIVFSRVDLPTPVDIPASAMSIGDTRLASVLQKDGARVSTIEHLMSACAGLGIDNLYVDVTAEEIPIMDGSAASFVFLIQSAGIEEQNAPKRFIKVKKPVEVRDGDKFARLDPFFGFKLKFTIDFRHPAVDKTGQALEVDFANTSYVREIARARTFGFAHEVEMMRELGLARGGSMDNAIVLDEYRILNNDGLRYDDEFVKHKMLDAIGDLYVVGHPLLASYTAYKSGHGLNNALLRELLAHEDAYEIVTFDDPQAAPSGFAFDTQTAFA.

Residues H78, H237, and D241 each coordinate Zn(2+). H264 serves as the catalytic Proton donor.

It belongs to the LpxC family. Requires Zn(2+) as cofactor.

It carries out the reaction a UDP-3-O-[(3R)-3-hydroxyacyl]-N-acetyl-alpha-D-glucosamine + H2O = a UDP-3-O-[(3R)-3-hydroxyacyl]-alpha-D-glucosamine + acetate. It functions in the pathway glycolipid biosynthesis; lipid IV(A) biosynthesis; lipid IV(A) from (3R)-3-hydroxytetradecanoyl-[acyl-carrier-protein] and UDP-N-acetyl-alpha-D-glucosamine: step 2/6. Its function is as follows. Catalyzes the hydrolysis of UDP-3-O-myristoyl-N-acetylglucosamine to form UDP-3-O-myristoylglucosamine and acetate, the committed step in lipid A biosynthesis. The sequence is that of UDP-3-O-acyl-N-acetylglucosamine deacetylase from Burkholderia multivorans (strain ATCC 17616 / 249).